Reading from the N-terminus, the 160-residue chain is MGVFNYETETTSVIPAARLFKAFILDGDNLFPKVAPQAISSVENIEGNGGPGTIKKISFPEGFPFKYVKDRVDEVDHTNFKYNYSVIEGGPIGDTLEKISNEIKIVATPDGGSILKISNKYHTKGDHEVKAEQVKASKEMGETLLRAVESYLLAHSDAYN.

Positions 55, 82, 84, and 101 each coordinate brassinolide.

This sequence belongs to the BetVI family.

It is found in the cytoplasm. In terms of biological role, may be a general steroid carrier protein. The chain is Major pollen allergen Bet v 1-A (BETVIA) from Betula pendula (European white birch).